A 316-amino-acid polypeptide reads, in one-letter code: Glutathione synthetase (316 aa).

The 188-residue stretch at 124-311 (NEKLAALLFP…IAGLLFDAIE (188 aa)) folds into the ATP-grasp domain. 151–208 (FVLAHGQAVLKPLDGMGGRSIFRSGTGDPNLNVILETLTDGGRKLTLAQRFIPDITAG) contributes to the ATP binding site. Residues Glu282 and Asn284 each contribute to the Mg(2+) site.

The protein belongs to the prokaryotic GSH synthase family. It depends on Mg(2+) as a cofactor. Requires Mn(2+) as cofactor.

It carries out the reaction gamma-L-glutamyl-L-cysteine + glycine + ATP = glutathione + ADP + phosphate + H(+). Its pathway is sulfur metabolism; glutathione biosynthesis; glutathione from L-cysteine and L-glutamate: step 2/2. The polypeptide is Glutathione synthetase (Xanthomonas campestris pv. campestris (strain ATCC 33913 / DSM 3586 / NCPPB 528 / LMG 568 / P 25)).